The primary structure comprises 218 residues: MSAIALGMIIFAYLCGSISSAILICRLAGLPDPRQHGSGNPGATNVLRIGGRSTAAIVLICDVLKGMIPVWLAYQLYVPPFYLGITAIAACLGHIYPIFFQFKGGKGVATAFGAIAAIGWDLTGLMMGTWLLTILLSGYSSLGAIVSALIAPFYVWWFKPEFTFPVAMLCCLVLLRHHDNIQRLWRGQENRLWNKLKKKKEMTEKEKKRTEKEQRKED.

The next 5 helical transmembrane spans lie at Ile4 to Ile24, Thr54 to Tyr74, Pro80 to Phe100, Gly107 to Met127, and Trp130 to Ile150.

This sequence belongs to the PlsY family. In terms of assembly, probably interacts with PlsX.

It localises to the cell inner membrane. It carries out the reaction an acyl phosphate + sn-glycerol 3-phosphate = a 1-acyl-sn-glycero-3-phosphate + phosphate. The protein operates within lipid metabolism; phospholipid metabolism. Catalyzes the transfer of an acyl group from acyl-phosphate (acyl-PO(4)) to glycerol-3-phosphate (G3P) to form lysophosphatidic acid (LPA). This enzyme utilizes acyl-phosphate as fatty acyl donor, but not acyl-CoA or acyl-ACP. The polypeptide is Glycerol-3-phosphate acyltransferase (Photorhabdus laumondii subsp. laumondii (strain DSM 15139 / CIP 105565 / TT01) (Photorhabdus luminescens subsp. laumondii)).